The chain runs to 404 residues: Lissencephaly-1 homolog (404 aa).

The LisH domain occupies 7–39 (QKEEINRAIAEYMQNNGYSESFSVFLKESSLSE). Residues 54-81 (TTVLRLQRKVNDLESKLQESQREINHGA) adopt a coiled-coil conformation. Basic and acidic residues predominate over residues 69–89 (KLQESQREINHGAPTRDKRQA). The interval 69–90 (KLQESQREINHGAPTRDKRQAA) is disordered. WD repeat units lie at residues 104-145 (GHRL…RTLK), 146-185 (GHTD…DCLK), 189-228 (GHEH…CVYT), 231-270 (GHND…AKLV), 273-327 (DHEH…VLFT), 330-369 (AHEN…CMKA), and 372-404 (AHEH…WECR).

This sequence belongs to the WD repeat LIS1/nudF family. As to quaternary structure, component of a dynein-regulating complex composed of at least lis-1 and nud-2. Interacts with nud-2; the interaction is direct. In terms of tissue distribution, expressed in all classes of neurons in the ventral cord. Expressed in the multinucleate spermathecal valves and adult seam cells.

The protein resides in the cytoplasm. Its subcellular location is the cytoskeleton. It localises to the microtubule organizing center. The protein localises to the centrosome. It is found in the chromosome. The protein resides in the centromere. Its subcellular location is the kinetochore. It localises to the nucleus envelope. Functionally, positively regulates the activity of the minus-end directed microtubule motor protein dynein. May enhance dynein-mediated microtubule sliding by targeting dynein to the microtubule plus end. Required for several dynein- and microtubule-dependent processes such as nuclear migration during cell division. Part of a complex with nud-2, which is recruited to the nuclear envelope by unc-83, where, in turn, it recruits dynein to the nuclear surface and regulates nuclear migration in hypodermal precursor cells. Plays a role in GABAergic synaptic vesicle localization in the ventral nerve cord. Required for neuronal cell differentiation. This is Lissencephaly-1 homolog from Caenorhabditis elegans.